The chain runs to 159 residues: Transcriptional repressor NrdR (159 aa).

A zinc finger spans residues 3–34 (CPFCRHEDTQVVDSRVSEDGAAIRRRRRCSAC). The ATP-cone domain maps to 49–139 (PAVVKKDGSR…VYRRFEDVSE (91 aa)).

The protein belongs to the NrdR family. The cofactor is Zn(2+).

Functionally, negatively regulates transcription of bacterial ribonucleotide reductase nrd genes and operons by binding to NrdR-boxes. The chain is Transcriptional repressor NrdR from Burkholderia vietnamiensis (strain G4 / LMG 22486) (Burkholderia cepacia (strain R1808)).